Reading from the N-terminus, the 277-residue chain is Phosphoenolpyruvate synthase regulatory protein (277 aa).

157–164 is a binding site for ADP; it reads GVSRCGKT.

The protein belongs to the pyruvate, phosphate/water dikinase regulatory protein family. PSRP subfamily.

It catalyses the reaction [pyruvate, water dikinase] + ADP = [pyruvate, water dikinase]-phosphate + AMP + H(+). It carries out the reaction [pyruvate, water dikinase]-phosphate + phosphate + H(+) = [pyruvate, water dikinase] + diphosphate. In terms of biological role, bifunctional serine/threonine kinase and phosphorylase involved in the regulation of the phosphoenolpyruvate synthase (PEPS) by catalyzing its phosphorylation/dephosphorylation. This chain is Phosphoenolpyruvate synthase regulatory protein, found in Salmonella agona (strain SL483).